The sequence spans 182 residues: MACCSTSFCGFPTCSTGGTCGSNFCQPTCCQTSCCQPTSIQTSCCQPTSIQTSCCQPTSIQTSCCQPISIQTSCCQPTCLQTSGCETGCGIGGSIGYGQVGSSGAVSSRTKWCRPDCRVEGTSLPPCCVVSCTSPSCCQLYYAQASCCRPSYCGQSCCRPACCCQPTCIEPVCEPTCCEPTC.

Tandem repeats lie at residues 27 to 36 (PTCCQTSCCQ), 37 to 46 (PTSIQTSCCQ), 47 to 56 (PTSIQTSCCQ), 57 to 66 (PTSIQTSCCQ), 67 to 76 (PISIQTSCCQ), and 77 to 86 (PTCLQTSGCE). The 6 X 10 AA tandem repeats stretch occupies residues 27–86 (PTCCQTSCCQPTSIQTSCCQPTSIQTSCCQPTSIQTSCCQPISIQTSCCQPTCLQTSGCE).

Functionally, the keratin products of mammalian epidermal derivatives such as wool and hair consist of microfibrils embedded in a rigid matrix of other proteins. The matrix proteins include the high-sulfur and high-tyrosine keratins, having molecular weights of 6-20 kDa, whereas the microfibrils contain the larger, low-sulfur keratins (40-56 kDa). The chain is Keratin, high-sulfur matrix protein, B2D from Ovis aries (Sheep).